The following is a 537-amino-acid chain: Organic anion transporter 3 (537 aa).

At 1 to 11 the chain is on the cytoplasmic side; the sequence is MTFSEILDRVG. Ser4 bears the Phosphoserine mark. The chain crosses the membrane as a helical span at residues 12–32; it reads SMGPFQYLHVTLLALPILGIA. The Extracellular portion of the chain corresponds to 33-123; the sequence is NHNLLQIFTA…LVCGSNKLKE (91 aa). A glycan (N-linked (GlcNAc...) asparagine) is linked at Asn81. Residues 124 to 144 form a helical membrane-spanning segment; it reads MAQSVFMAGILVGGPVFGELS. The Cytoplasmic portion of the chain corresponds to 145-150; the sequence is DRFGRK. The chain crosses the membrane as a helical span at residues 151-171; the sequence is PILTWSYLLLAASGSSAAFSP. Residues 172-176 lie on the Extracellular side of the membrane; that stretch reads SLTVY. The chain crosses the membrane as a helical span at residues 177-197; it reads MIFRFLCGCSISGISLSTIIL. Residues 198 to 212 are Cytoplasmic-facing; it reads NVEWVPTSTRAISST. A helical membrane pass occupies residues 213-233; sequence TIGYCYTIGQFILPGLAYAVP. The Extracellular segment spans residues 234 to 236; it reads QWR. The helical transmembrane segment at 237–257 threads the bilayer; sequence WLQLSVSAAFFIFSLLSWWVP. Topologically, residues 258–327 are cytoplasmic; sequence ESIRWLVLSG…FRVSILRRVT (70 aa). The helical transmembrane segment at 328-348 threads the bilayer; that stretch reads FCLSLAWFATGFAYYSLAMGV. Residues 349 to 354 lie on the Extracellular side of the membrane; sequence EEFGVN. Residues 355 to 375 traverse the membrane as a helical segment; the sequence is IYILQIIFGGVDIPAKFITIL. The Cytoplasmic segment spans residues 376–383; the sequence is SISYLGRR. A helical transmembrane segment spans residues 384–404; the sequence is ITQGFLLILAGVAILALIFVS. The Extracellular segment spans residues 405–411; the sequence is SEMQLLR. Residues 412 to 432 form a helical membrane-spanning segment; the sequence is TALAVFGKGCLSGSFSCLFLY. Over 433-471 the chain is Cytoplasmic; the sequence is TSELYPTVLRQTGMGISNIWARVGSMIAPLVKITGELQP. Residues 472–492 form a helical membrane-spanning segment; sequence FIPNVIFGTMTLLGGSAAFFL. Residues 493-537 are Extracellular-facing; the sequence is LETLNRPLPETIEDIQDWYQQTKKTKQEPEAEKASQTIPLKTGGP. The disordered stretch occupies residues 513–537; sequence QTKKTKQEPEAEKASQTIPLKTGGP.

This sequence belongs to the major facilitator (TC 2.A.1) superfamily. Organic cation transporter (TC 2.A.1.19) family. In terms of tissue distribution, expressed mainly in kidney. In kidney, detected in almost all parts of the nephron, including macula densa cells. Expressed (at protein level) throughout the renal cortex. Widely distributed in the brain with no large regional differences. Expressed in the choroid plexus (CP, located in the ventricles of the brain). Expressed in developing bone. Weakly expressed in brain and eye.

The protein resides in the basolateral cell membrane. It catalyses the reaction estrone 3-sulfate(out) + glutarate(in) = estrone 3-sulfate(in) + glutarate(out). It carries out the reaction estrone 3-sulfate(in) + 2-oxoglutarate(out) = estrone 3-sulfate(out) + 2-oxoglutarate(in). The catalysed reaction is taurocholate(out) + glutarate(in) = taurocholate(in) + glutarate(out). The enzyme catalyses dehydroepiandrosterone 3-sulfate(out) + glutarate(in) = dehydroepiandrosterone 3-sulfate(in) + glutarate(out). It catalyses the reaction glutarate(in) + 2-oxoglutarate(out) = glutarate(out) + 2-oxoglutarate(in). It carries out the reaction urate(in) + 2-oxoglutarate(out) = urate(out) + 2-oxoglutarate(in). The catalysed reaction is prostaglandin F2alpha(out) + glutarate(in) = prostaglandin F2alpha(in) + glutarate(out). The enzyme catalyses prostaglandin F2alpha(out) + 2-oxoglutarate(in) = prostaglandin F2alpha(in) + 2-oxoglutarate(out). It catalyses the reaction (R)-carnitine(out) + 2-oxoglutarate(in) = (R)-carnitine(in) + 2-oxoglutarate(out). It carries out the reaction glutarate(in) + (R)-carnitine(out) = glutarate(out) + (R)-carnitine(in). The catalysed reaction is prostaglandin E2(out) + 2-oxoglutarate(in) = prostaglandin E2(in) + 2-oxoglutarate(out). The enzyme catalyses prostaglandin E2(out) + glutarate(in) = prostaglandin E2(in) + glutarate(out). It catalyses the reaction urate(in) + glutarate(out) = urate(out) + glutarate(in). It carries out the reaction taurocholate(out) + 2-oxoglutarate(in) = taurocholate(in) + 2-oxoglutarate(out). The catalysed reaction is dehydroepiandrosterone 3-sulfate(out) + 2-oxoglutarate(in) = dehydroepiandrosterone 3-sulfate(in) + 2-oxoglutarate(out). The enzyme catalyses kynurenate(out) + a dicarboxylate(in) = kynurenate(in) + a dicarboxylate(out). It catalyses the reaction (indol-3-yl)acetate(out) + a dicarboxylate(in) = (indol-3-yl)acetate(in) + a dicarboxylate(out). It carries out the reaction indoxyl sulfate(out) + a dicarboxylate(in) = indoxyl sulfate(in) + a dicarboxylate(out). The catalysed reaction is N-benzoylglycine(out) + a dicarboxylate(in) = N-benzoylglycine(in) + a dicarboxylate(out). The enzyme catalyses 3-carboxy-4-methyl-5-propyl-2-furanpropanoate(out) + a dicarboxylate(in) = 3-carboxy-4-methyl-5-propyl-2-furanpropanoate(in) + a dicarboxylate(out). It catalyses the reaction (6R)-L-erythro-5,6,7,8-tetrahydrobiopterin(out) + a dicarboxylate(in) = (6R)-L-erythro-5,6,7,8-tetrahydrobiopterin(in) + a dicarboxylate(out). It carries out the reaction L-erythro-7,8-dihydrobiopterin(out) + a dicarboxylate(in) = L-erythro-7,8-dihydrobiopterin(in) + a dicarboxylate(out). The catalysed reaction is L-sepiapterin(out) + a dicarboxylate(in) = L-sepiapterin(in) + a dicarboxylate(out). Expression inhibited by androgens such as testosterone. In terms of biological role, functions as an organic anion/dicarboxylate exchanger that couples organic anion uptake indirectly to the sodium gradient. Transports organic anions such as estrone 3-sulfate (E1S) and urate in exchange for dicarboxylates such as glutarate or ketoglutarate (2-oxoglutarate). Plays an important role in the excretion of endogenous and exogenous organic anions, especially from the kidney and the brain. E1S transport is pH- and chloride-dependent and may also involve E1S/cGMP exchange. Responsible for the transport of prostaglandin E2 (PGE2) and prostaglandin F2(alpha) (PGF2(alpha)) in the basolateral side of the renal tubule. Involved in the transport of neuroactive tryptophan metabolites kynurenate and xanthurenate. Functions as a biopterin transporters involved in the uptake and the secretion of coenzymes tetrahydrobiopterin (BH4), dihydrobiopterin (BH2) and sepiapterin to urine, thereby determining baseline levels of blood biopterins. May be involved in the basolateral transport of steviol, a metabolite of the popular sugar substitute stevioside. May participate in the detoxification/ renal excretion of drugs and xenobiotics, such as the histamine H(2)-receptor antagonists fexofenadine and cimetidine, the antibiotic benzylpenicillin (PCG), the anionic herbicide 2,4-dichloro-phenoxyacetate (2,4-D), the diagnostic agent p-aminohippurate (PAH), the antiviral acyclovir (ACV), and the mycotoxin ochratoxin (OTA), by transporting these exogenous organic anions across the cell membrane in exchange for dicarboxylates such as 2-oxoglutarate. May contribute to the release of cortisol in the adrenals. Involved in one of the detoxification systems on the choroid plexus (CP), removes substrates such as E1S or taurocholate (TC), PCG, 2,4-D and PAH, from the cerebrospinal fluid (CSF) to the blood for eventual excretion in urine and bile. Also contributes to the uptake of several other organic compounds such as the prostanoids prostaglandin E(2) and prostaglandin F(2-alpha), L-carnitine, and the therapeutic drugs allopurinol, 6-mercaptopurine (6-MP) and 5-fluorouracil (5-FU). Mediates the transport of PAH, PCG, and the statins pravastatin and pitavastatin, from the cerebrum into the blood circulation across the blood-brain barrier (BBB). Contributes to the renal uptake of potent uremic toxins (indoxyl sulfate (IS), indole acetate (IA), hippurate/N-benzoylglycine (HA) and 3-carboxy-4-methyl-5-propyl-2-furanpropionate (CMPF)), pravastatin, PCG, E1S and dehydroepiandrosterone sulfate (DHEAS), and is partly involved in the renal uptake of temocaprilat (an angiotensin-converting enzyme (ACE) inhibitor). In summary, plays a role in the efflux of drugs and xenobiotics, helping reduce their undesired toxicological effects on the body. This Mus musculus (Mouse) protein is Organic anion transporter 3 (Slc22a8).